We begin with the raw amino-acid sequence, 109 residues long: uncharacterized protein (109 aa).

Transmembrane regions (helical) follow at residues 7 to 27 (IITI…PFFV), 37 to 57 (YIRY…VVYC), and 63 to 83 (ILTG…LGLH).

This sequence belongs to the AzlD/HI_1737/HP1330 family.

It localises to the cell membrane. This is an uncharacterized protein from Haemophilus influenzae (strain ATCC 51907 / DSM 11121 / KW20 / Rd).